A 31-amino-acid chain; its full sequence is Cytochrome b6-f complex subunit 6 (31 aa).

The helical transmembrane segment at 3–23 (TIISYFGFLLASIIFTLILFI) threads the bilayer.

The protein belongs to the PetL family. In terms of assembly, the 4 large subunits of the cytochrome b6-f complex are cytochrome b6, subunit IV (17 kDa polypeptide, PetD), cytochrome f and the Rieske protein, while the 4 small subunits are PetG, PetL, PetM and PetN. The complex functions as a dimer.

The protein localises to the plastid. The protein resides in the chloroplast thylakoid membrane. Component of the cytochrome b6-f complex, which mediates electron transfer between photosystem II (PSII) and photosystem I (PSI), cyclic electron flow around PSI, and state transitions. PetL is important for photoautotrophic growth as well as for electron transfer efficiency and stability of the cytochrome b6-f complex. This Abies homolepis (Nikko fir) protein is Cytochrome b6-f complex subunit 6.